The following is a 150-amino-acid chain: UPF0178 protein Maqu_2186 (150 aa).

The protein belongs to the UPF0178 family.

The sequence is that of UPF0178 protein Maqu_2186 from Marinobacter nauticus (strain ATCC 700491 / DSM 11845 / VT8) (Marinobacter aquaeolei).